A 214-amino-acid chain; its full sequence is Thymidylate kinase (214 aa).

Position 12-19 (G12–S19) interacts with ATP.

The protein belongs to the thymidylate kinase family.

It carries out the reaction dTMP + ATP = dTDP + ADP. Functionally, phosphorylation of dTMP to form dTDP in both de novo and salvage pathways of dTTP synthesis. The protein is Thymidylate kinase of Gluconobacter oxydans (strain 621H) (Gluconobacter suboxydans).